Consider the following 302-residue polypeptide: MSKPDVAQVKAFLLQLQDEICRGLELADGAGHFVEDAWRREGGGGGRTRVLRHGAVIEQGGVNFSHVHGDAMPASATAHRPELAGRRFEAMGVSLVIHPHNPYVPTSHANVRFFIAEKEGEEPIWWFGGGFDLTPFYPFEEDVRHWHQLSRDLCQPFGTDIYPEFKSWCDRYFFLKHRDETRGVGGLFFDDLNRWPFADCFAFMQAVGKGYLDAYLPIVERRKALAYGEREREFQLYRRGRYVEFNLVYDRGTLFGLQTGGRTESILMSMPPLARWEYDWQPSAGSPEALLYSDYLKPREWL.

Ser94 contributes to the substrate binding site. Positions 98 and 108 each coordinate a divalent metal cation. The Proton donor role is filled by His108. 110 to 112 is a binding site for substrate; it reads NVR. Residues His147 and His177 each coordinate a divalent metal cation. Residues 242-277 form an important for dimerization region; sequence YVEFNLVYDRGTLFGLQTGGRTESILMSMPPLARWE. 260–262 is a substrate binding site; it reads GGR.

The protein belongs to the aerobic coproporphyrinogen-III oxidase family. In terms of assembly, homodimer. The cofactor is a divalent metal cation.

The protein localises to the cytoplasm. It carries out the reaction coproporphyrinogen III + O2 + 2 H(+) = protoporphyrinogen IX + 2 CO2 + 2 H2O. It participates in porphyrin-containing compound metabolism; protoporphyrin-IX biosynthesis; protoporphyrinogen-IX from coproporphyrinogen-III (O2 route): step 1/1. Its function is as follows. Involved in the heme biosynthesis. Catalyzes the aerobic oxidative decarboxylation of propionate groups of rings A and B of coproporphyrinogen-III to yield the vinyl groups in protoporphyrinogen-IX. In Aeromonas hydrophila subsp. hydrophila (strain ATCC 7966 / DSM 30187 / BCRC 13018 / CCUG 14551 / JCM 1027 / KCTC 2358 / NCIMB 9240 / NCTC 8049), this protein is Oxygen-dependent coproporphyrinogen-III oxidase.